Here is a 64-residue protein sequence, read N- to C-terminus: uncharacterized protein (64 aa).

This is an uncharacterized protein from Bdellovibrio phage phiMH2K (Bacteriophage phiMH2K).